A 516-amino-acid chain; its full sequence is Flagellar radial spoke protein 3 (516 aa).

Composition is skewed to polar residues over residues 1–11 (MVQAKAQQQLY) and 62–74 (ATQT…SPAS). Disordered stretches follow at residues 1-32 (MVQA…EDET), 60-90 (ADAT…TPEA), 388-412 (NAKW…AAEE), and 424-447 (AAAE…DGVE). A compositionally biased stretch (basic and acidic residues) spans 391-412 (WEADKAEAAEKARAEAEAAAEE).

It belongs to the flagellar radial spoke RSP3 family. In terms of assembly, interacts with FAP91. In terms of processing, protein 3 is one of the 5 radial spoke proteins that are phosphorylated. Protein 3a might only differ from protein 3 in being unphosphorylated.

It is found in the cytoplasm. Its subcellular location is the cytoskeleton. It localises to the flagellum axoneme. In terms of biological role, protein 3 may attach the radial spoke to the outer doublet microtubule or is required to form a stable spoke structure. Functionally, flagellar radial spokes contribute to the regulation of dynein arm activity and thus the pattern of flagellar bending. They consist of a thin stalk, which is attached to the a subfiber of the outer doublet microtubule, and a bulbous head, which is attached to the stalk and appears to interact with the projections from the central pair of microtubules. This chain is Flagellar radial spoke protein 3, found in Chlamydomonas reinhardtii (Chlamydomonas smithii).